We begin with the raw amino-acid sequence, 348 residues long: Protein RecA (348 aa).

66-73 (GPESSGKT) is a binding site for ATP.

The protein belongs to the RecA family.

It localises to the cytoplasm. Functionally, can catalyze the hydrolysis of ATP in the presence of single-stranded DNA, the ATP-dependent uptake of single-stranded DNA by duplex DNA, and the ATP-dependent hybridization of homologous single-stranded DNAs. It interacts with LexA causing its activation and leading to its autocatalytic cleavage. This chain is Protein RecA, found in Neisseria meningitidis serogroup A / serotype 4A (strain DSM 15465 / Z2491).